We begin with the raw amino-acid sequence, 231 residues long: Transmembrane gamma-carboxyglutamic acid protein 3 (231 aa).

A propeptide spanning residues Met1–Arg19 is cleaved from the precursor. In terms of domain architecture, Gla spans Ala20–Asn65. Residues Ala20 to Asp78 lie on the Extracellular side of the membrane. 4-carboxyglutamate is present on residues Glu22, Glu25, Glu26, Glu33, Glu35, Glu38, Glu39, Glu44, Glu45, Glu48, Glu51, Glu54, and Glu58. The cysteines at positions 36 and 41 are disulfide-linked. Residues Ala79 to Trp101 form a helical membrane-spanning segment. The Cytoplasmic portion of the chain corresponds to Arg102–Lys231. Disordered stretches follow at residues His140–Gly165 and Arg184–Lys231. The segment covering Gln201–Tyr212 has biased composition (polar residues).

In terms of processing, gla residues are produced after subsequent post-translational modifications of glutamate by a vitamin K-dependent gamma-carboxylase.

It localises to the membrane. The chain is Transmembrane gamma-carboxyglutamic acid protein 3 (Prrg3) from Mus musculus (Mouse).